The sequence spans 420 residues: Argininosuccinate synthase (420 aa).

23-31 (AYSGGLDTS) provides a ligand contact to ATP. Tyrosine 102 is a binding site for L-citrulline. Residue glycine 132 participates in ATP binding. Positions 134, 138, and 139 each coordinate L-aspartate. Asparagine 138 contributes to the L-citrulline binding site. Residues arginine 142, serine 190, glutamate 274, and tyrosine 286 each coordinate L-citrulline.

This sequence belongs to the argininosuccinate synthase family. Type 1 subfamily. As to quaternary structure, homotetramer.

Its subcellular location is the cytoplasm. The catalysed reaction is L-citrulline + L-aspartate + ATP = 2-(N(omega)-L-arginino)succinate + AMP + diphosphate + H(+). It participates in amino-acid biosynthesis; L-arginine biosynthesis; L-arginine from L-ornithine and carbamoyl phosphate: step 2/3. The protein is Argininosuccinate synthase of Renibacterium salmoninarum (strain ATCC 33209 / DSM 20767 / JCM 11484 / NBRC 15589 / NCIMB 2235).